We begin with the raw amino-acid sequence, 290 residues long: 4-hydroxy-tetrahydrodipicolinate synthase (290 aa).

Threonine 44 lines the pyruvate pocket. Tyrosine 132 functions as the Proton donor/acceptor in the catalytic mechanism. Lysine 160 acts as the Schiff-base intermediate with substrate in catalysis. A pyruvate-binding site is contributed by isoleucine 202.

Belongs to the DapA family. Homotetramer; dimer of dimers.

The protein resides in the cytoplasm. It catalyses the reaction L-aspartate 4-semialdehyde + pyruvate = (2S,4S)-4-hydroxy-2,3,4,5-tetrahydrodipicolinate + H2O + H(+). Its pathway is amino-acid biosynthesis; L-lysine biosynthesis via DAP pathway; (S)-tetrahydrodipicolinate from L-aspartate: step 3/4. Functionally, catalyzes the condensation of (S)-aspartate-beta-semialdehyde [(S)-ASA] and pyruvate to 4-hydroxy-tetrahydrodipicolinate (HTPA). This Geotalea uraniireducens (strain Rf4) (Geobacter uraniireducens) protein is 4-hydroxy-tetrahydrodipicolinate synthase.